Reading from the N-terminus, the 366-residue chain is MTPTTTPVSNPDALAPGTQDVHTLKGTLQRLAPGTPLRDSLDRIVRGHTGALIVIGDDENVTSICDGGFEFDVPFAATRLRELCKMDGAVILSSDIERIKRANVQLLPSPTWPTQESGTRHRSAERTALHTGVPVIAVSESQNTITLYVEGKAHMLEQPSTLLNRANQALGTMERYRDRLDQVNNRLHLAELHSYVTVIDVVSVIQREEMLRRVGEIIDGDVLELGKDAKQIQIQLSELRGDNDRERESIIADYLVTDGIPADEEIYAALEAISHLDDKALLKPANIARILGLPPTEEALDEPVAPRGYRTLNRIPRVQKFLMDKLIVEFGNLDALLNASVEDLSAVDGVGSLWARHITDGLGRLS.

In terms of domain architecture, DAC spans 21-159; sequence VHTLKGTLQR…EGKAHMLEQP (139 aa). ATP contacts are provided by residues G88, L106, and 119–123; that span reads TRHRS.

It belongs to the DisA family. In terms of assembly, homooctamer. The cofactor is Mg(2+).

It carries out the reaction 2 ATP = 3',3'-c-di-AMP + 2 diphosphate. Functionally, participates in a DNA-damage check-point. DisA forms globular foci that rapidly scan along the chromosomes searching for lesions. Also has diadenylate cyclase activity, catalyzing the condensation of 2 ATP molecules into cyclic di-AMP (c-di-AMP). c-di-AMP likely acts as a signaling molecule that may couple DNA integrity with a cellular process. The polypeptide is DNA integrity scanning protein DisA (Corynebacterium glutamicum (strain R)).